An 84-amino-acid polypeptide reads, in one-letter code: Cytochrome b559 subunit alpha (84 aa).

The helical transmembrane segment at 22–36 (IIHSITIPALFVAGW) threads the bilayer. Residue His24 coordinates heme.

Belongs to the PsbE/PsbF family. Heterodimer of an alpha subunit and a beta subunit. PSII is composed of 1 copy each of membrane proteins PsbA, PsbB, PsbC, PsbD, PsbE, PsbF, PsbH, PsbI, PsbJ, PsbK, PsbL, PsbM, PsbT, PsbX, PsbY, PsbZ, Psb30/Ycf12, at least 3 peripheral proteins of the oxygen-evolving complex and a large number of cofactors. It forms dimeric complexes. It depends on heme b as a cofactor.

The protein resides in the plastid. It is found in the chloroplast thylakoid membrane. This b-type cytochrome is tightly associated with the reaction center of photosystem II (PSII). PSII is a light-driven water:plastoquinone oxidoreductase that uses light energy to abstract electrons from H(2)O, generating O(2) and a proton gradient subsequently used for ATP formation. It consists of a core antenna complex that captures photons, and an electron transfer chain that converts photonic excitation into a charge separation. The protein is Cytochrome b559 subunit alpha of Guillardia theta (Cryptophyte).